A 192-amino-acid chain; its full sequence is MLQRNRIQTSSSTQTETTPPILRLRRPETRQKEDSKVKWTEDVIDNEHMGKHKSKVCCIFHPHREFGQSSDESSDSSSDSSDDSDYERNNDFDQNHRHSHNFDDINSDNSHSHSHGHNFDDKDDISNSSNNQDKGNTGMSKPSSSSPDNLVCEYGHIHKRNKKVRKPKRSSSPNAYERQPNYRNKSVVPVQK.

2 disordered regions span residues 1–53 (MLQR…GKHK) and 65–192 (EFGQ…PVQK). A compositionally biased stretch (low complexity) spans 8-18 (QTSSSTQTETT). Residues 25-49 (RRPETRQKEDSKVKWTEDVIDNEHM) show a composition bias toward basic and acidic residues. The segment covering 69–79 (SSDESSDSSSD) has biased composition (low complexity). The segment covering 86-103 (YERNNDFDQNHRHSHNFD) has biased composition (basic and acidic residues). Positions 134–148 (KGNTGMSKPSSSSPD) are enriched in polar residues. The segment covering 157-169 (IHKRNKKVRKPKR) has biased composition (basic residues).

This sequence belongs to the YPI1 family.

It is found in the nucleus. Functionally, regulator of type 1 phosphatases which maintains protein phosphatase activity under strict control. The chain is Type 1 phosphatases regulator YPI2 (YPI2) from Scheffersomyces stipitis (strain ATCC 58785 / CBS 6054 / NBRC 10063 / NRRL Y-11545) (Yeast).